Consider the following 394-residue polypeptide: Obg-like ATPase 1 (394 aa).

The 258-residue stretch at 25–282 (LKIGIVGLPN…MAPDEAAKYC (258 aa)) folds into the OBG-type G domain. Residues 34 to 39 (NVGKST), 56 to 60 (FCTIE), and 94 to 97 (DIAG) contribute to the ATP site. Mg(2+) is bound by residues Ser38 and Thr58. Phe129 is a GTP binding site. ATP is bound by residues 230 to 231 (NL), Leu231, and 263 to 265 (SGV). GTP is bound at residue 263 to 265 (SGV). Residues 303-386 (NLIYFFTAGP…QDGDIIFFKF (84 aa)) enclose the TGS domain.

Belongs to the TRAFAC class OBG-HflX-like GTPase superfamily. OBG GTPase family. YchF/OLA1 subfamily. Monomer (Potential). Interacts with CAR4/GAP1. The cofactor is Mg(2+).

The protein resides in the cytoplasm. It is found in the cytosol. Activated by GAP1. Hydrolyzes ATP, and can also hydrolyze GTP with lower efficiency. Has lower affinity for GTP (Potential). Exhibits GTPase activity. Confers sensitivity to salinity stress by suppressing the anti-oxidation enzymatic activities and increasing lipid peroxidation thus leading to the accumulation of reactive oxygen species (ROS). Acts as a negative regulator of disease resistance against bacterial pathogen. The polypeptide is Obg-like ATPase 1 (Arabidopsis thaliana (Mouse-ear cress)).